Consider the following 464-residue polypeptide: Delta(5) fatty acid desaturase A (464 aa).

One can recognise a Cytochrome b5 heme-binding domain in the interval 13–90 (GKQYSWSELA…LKNYEIGYIS (78 aa)). Residues His-48 and His-71 each contribute to the heme site. 2 helical membrane passes run 125–145 (AVSI…TYYL) and 153–173 (FYLN…FSMH). Residues 176–180 (HDSCH) carry the Histidine box-1 motif. The Histidine box-2 motif lies at 212-217 (HVIGHH). A helical transmembrane segment spans residues 318–338 (FTDLICYFLIAEFVFGWYLTI). A Histidine box-3 motif is present at residues 396–400 (QVVHH).

The protein belongs to the fatty acid desaturase type 1 family. Requires Fe cation as cofactor.

It is found in the membrane. Functionally, specific for desaturation of the 5 position in C16 and C18 fatty acids. The protein is Delta(5) fatty acid desaturase A (fadA) of Dictyostelium discoideum (Social amoeba).